The chain runs to 587 residues: Arginine--tRNA ligase (587 aa).

The 'HIGH' region signature appears at 123-133; the sequence is ANVAKPLHVGH.

Belongs to the class-I aminoacyl-tRNA synthetase family. Monomer.

The protein resides in the cytoplasm. It carries out the reaction tRNA(Arg) + L-arginine + ATP = L-arginyl-tRNA(Arg) + AMP + diphosphate. This chain is Arginine--tRNA ligase, found in Alkaliphilus oremlandii (strain OhILAs) (Clostridium oremlandii (strain OhILAs)).